The sequence spans 943 residues: Isoleucine--tRNA ligase (943 aa).

The 'HIGH' region signature appears at 59-69 (PYANGQIHLGH). Glutamate 577 contributes to the L-isoleucyl-5'-AMP binding site. Positions 618–622 (KMSKS) match the 'KMSKS' region motif. Residue lysine 621 participates in ATP binding. The Zn(2+) site is built by cysteine 906, cysteine 909, cysteine 926, and cysteine 929.

This sequence belongs to the class-I aminoacyl-tRNA synthetase family. IleS type 1 subfamily. Monomer. Zn(2+) serves as cofactor.

The protein localises to the cytoplasm. It carries out the reaction tRNA(Ile) + L-isoleucine + ATP = L-isoleucyl-tRNA(Ile) + AMP + diphosphate. Catalyzes the attachment of isoleucine to tRNA(Ile). As IleRS can inadvertently accommodate and process structurally similar amino acids such as valine, to avoid such errors it has two additional distinct tRNA(Ile)-dependent editing activities. One activity is designated as 'pretransfer' editing and involves the hydrolysis of activated Val-AMP. The other activity is designated 'posttransfer' editing and involves deacylation of mischarged Val-tRNA(Ile). This Xylella fastidiosa (strain M23) protein is Isoleucine--tRNA ligase.